We begin with the raw amino-acid sequence, 601 residues long: Elongation factor 4 (601 aa).

The tr-type G domain occupies 6-188 (SHIRNFSIIA…QIVHRVPAPE (183 aa)). Residues 18–23 (DHGKST) and 135–138 (NKID) contribute to the GTP site.

This sequence belongs to the TRAFAC class translation factor GTPase superfamily. Classic translation factor GTPase family. LepA subfamily.

Its subcellular location is the cell inner membrane. The catalysed reaction is GTP + H2O = GDP + phosphate + H(+). In terms of biological role, required for accurate and efficient protein synthesis under certain stress conditions. May act as a fidelity factor of the translation reaction, by catalyzing a one-codon backward translocation of tRNAs on improperly translocated ribosomes. Back-translocation proceeds from a post-translocation (POST) complex to a pre-translocation (PRE) complex, thus giving elongation factor G a second chance to translocate the tRNAs correctly. Binds to ribosomes in a GTP-dependent manner. This chain is Elongation factor 4, found in Anaeromyxobacter sp. (strain K).